A 129-amino-acid polypeptide reads, in one-letter code: Profilin-4 (129 aa).

It belongs to the profilin family. Expressed in testis, in germ cells in seminiferous tubules (at protein level).

It localises to the cytoplasm. Functionally, involved in male fertility. Required for manchette development and acrosome biogenesis during spermiogenesis. Binds in vitro to phospholipids, including phosphatidylinositol 3-phosphate (PtdIns(3)P), phosphatidylinositol 4,5-bisphosphate (PtdIns(4,5)P2), phosphatidylinositol 4-phosphate (PtdIns(4)P) and phosphatidic acid (PA). Contrary to other profilin family members, does not bind to actin in vitro. The protein is Profilin-4 (Pfn4) of Mus musculus (Mouse).